The sequence spans 338 residues: L-serine dehydratase (338 aa).

Lys-39 carries the post-translational modification N6-(pyridoxal phosphate)lysine.

The protein belongs to the serine/threonine dehydratase family. Requires pyridoxal 5'-phosphate as cofactor.

Its subcellular location is the cytoplasm. The enzyme catalyses L-serine = pyruvate + NH4(+). It functions in the pathway carbohydrate biosynthesis; gluconeogenesis. This chain is L-serine dehydratase (SDL1), found in Saccharomyces cerevisiae (strain AWRI1631) (Baker's yeast).